The sequence spans 111 residues: Translation initiation factor 1A (111 aa).

A compositionally biased stretch (basic residues) spans 1 to 13; it reads MKKSNNKNNHKNN. Residues 1–30 are disordered; sequence MKKSNNKNNHKNNHNNNQGGENIRVRSPRR. Residues 23–96 enclose the S1-like domain; that stretch reads IRVRSPRRGE…EKADVIWRYT (74 aa).

It belongs to the eIF-1A family.

Seems to be required for maximal rate of protein biosynthesis. Enhances ribosome dissociation into subunits and stabilizes the binding of the initiator Met-tRNA(I) to 40 S ribosomal subunits. The polypeptide is Translation initiation factor 1A (Methanosphaera stadtmanae (strain ATCC 43021 / DSM 3091 / JCM 11832 / MCB-3)).